Reading from the N-terminus, the 530-residue chain is NMDA receptor synaptonuclear signaling and neuronal migration factor (530 aa).

A lipid anchor (N-myristoyl glycine) is attached at G2. The tract at residues 2 to 233 (GAAASRRRAL…FSFQTATTTM (232 aa)) is necessary and sufficient to elicit dendritic processes and synaptic contacts. 2 disordered regions span residues 34–67 (SQSH…APQN) and 125–197 (KGRR…GRRK). Positions 38–48 (PENRNGADHLL) are enriched in basic and acidic residues. The segment covering 125–137 (KGRRQRHPHHHSQ) has biased composition (basic residues). Over residues 153–162 (PCQSWAGSRQ) the composition is skewed to polar residues. Position 204 is a phosphoserine (S204). The short motif at 247-250 (RRKR) is the Nuclear localization signal element. The interval 285 to 312 (RSFSRSWSDPTPMKADTSHDSRDSSDLQ) is disordered. 2 positions are modified to phosphoserine: S290 and S292. A compositionally biased stretch (basic and acidic residues) spans 300–309 (DTSHDSRDSS).

It belongs to the NSMF family. As to quaternary structure, interacts with KPNA1; the interaction occurs in a calcium-independent manner after synaptic NMDA receptor stimulation and is required for nuclear import of NSMF but is competed by CABP1. Interacts (via the central NLS-containing motif region) with CABP1 (via EF-hands 1 and 2); the interaction occurs in a calcium-dependent manner after synaptic NMDA receptor stimulation and prevents the nuclear import of NSMF. Cannot be competed by calmodulin. In terms of processing, proteolytically processed after NMDA receptor activation. Cleaved in a calcium-dependent and calpain-sensitive manner. Calpain cleavage is essential for the translocation process from dendrites to the nucleus. In terms of tissue distribution, highly expressed in adult and fetal brain. Weakly expressed in heart, liver, spleen, testis, small intestine, skeletal muscle, peripheral white blood cells and kidney.

It is found in the nucleus. The protein localises to the nucleus envelope. The protein resides in the nucleus membrane. Its subcellular location is the nucleus matrix. It localises to the cytoplasm. It is found in the cell cortex. The protein localises to the cytoskeleton. The protein resides in the cell membrane. Its subcellular location is the cell projection. It localises to the dendrite. It is found in the synapse. The protein localises to the synaptosome. The protein resides in the postsynaptic density. Its subcellular location is the membrane. Functionally, couples NMDA-sensitive glutamate receptor signaling to the nucleus and triggers long-lasting changes in the cytoarchitecture of dendrites and spine synapse processes. Part of the cAMP response element-binding protein (CREB) shut-off signaling pathway. Stimulates outgrowth of olfactory axons and migration of gonadotropin-releasing hormone (GnRH) and luteinizing-hormone-releasing hormone (LHRH) neuronal cells. This is NMDA receptor synaptonuclear signaling and neuronal migration factor (NSMF) from Homo sapiens (Human).